The chain runs to 569 residues: Endo-1,4-beta-xylanase 5 (569 aa).

Residues 1–25 (MKNINNGFFLCMLLLLWCFVHSGIS) form the signal peptide. N-linked (GlcNAc...) asparagine glycans are attached at residues Asn197, Asn261, and Asn307. The GH10 domain occupies 209 to 500 (EQTKPSFLLG…NTATGDVIDK (292 aa)). Glu332 functions as the Proton donor in the catalytic mechanism. Asn346 is a glycosylation site (N-linked (GlcNAc...) asparagine). The Nucleophile role is filled by Glu439. 3 N-linked (GlcNAc...) asparagine glycosylation sites follow: Asn490, Asn536, and Asn544.

This sequence belongs to the glycosyl hydrolase 10 (cellulase F) family.

The enzyme catalyses Endohydrolysis of (1-&gt;4)-beta-D-xylosidic linkages in xylans.. It participates in glycan degradation; xylan degradation. Functionally, binds to and hydrolyzes insoluble and soluble xylan substrates. This Arabidopsis thaliana (Mouse-ear cress) protein is Endo-1,4-beta-xylanase 5.